We begin with the raw amino-acid sequence, 764 residues long: FAST kinase domain-containing protein 5, mitochondrial (764 aa).

The transit peptide at 1 to 27 directs the protein to the mitochondrion; the sequence is MAATLKSLKLVRYRAFCSPSAFGAVRS. At Ser-95 the chain carries Phosphoserine. Lys-507 is modified (N6-acetyllysine). Residues 697-757 form the RAP domain; that stretch reads LAVQFTNRNQ…RLEKLAFLHE (61 aa).

The protein belongs to the FAST kinase family. Found in a complex with GRSF1, DDX28, DHX30 and FASTKD2. Associates with the 12S mitochondrial rRNA (12S mt-rRNA). As to expression, expression detected in spleen, thymus, testis, ovary, colon, heart, smooth muscle, kidney, brain, lung, liver and white adipose tissue with highest expression in heart, smooth muscle, liver and thyroid.

It localises to the mitochondrion matrix. The protein localises to the mitochondrion nucleoid. Its function is as follows. Plays an important role in the processing of non-canonical mitochondrial mRNA precursors. The chain is FAST kinase domain-containing protein 5, mitochondrial (FASTKD5) from Homo sapiens (Human).